Here is a 281-residue protein sequence, read N- to C-terminus: ATP phosphoribosyltransferase (281 aa).

This sequence belongs to the ATP phosphoribosyltransferase family. Long subfamily. It depends on Mg(2+) as a cofactor.

Its subcellular location is the cytoplasm. The catalysed reaction is 1-(5-phospho-beta-D-ribosyl)-ATP + diphosphate = 5-phospho-alpha-D-ribose 1-diphosphate + ATP. It functions in the pathway amino-acid biosynthesis; L-histidine biosynthesis; L-histidine from 5-phospho-alpha-D-ribose 1-diphosphate: step 1/9. With respect to regulation, feedback inhibited by histidine. Its function is as follows. Catalyzes the condensation of ATP and 5-phosphoribose 1-diphosphate to form N'-(5'-phosphoribosyl)-ATP (PR-ATP). Has a crucial role in the pathway because the rate of histidine biosynthesis seems to be controlled primarily by regulation of HisG enzymatic activity. The chain is ATP phosphoribosyltransferase from Kocuria rhizophila (strain ATCC 9341 / DSM 348 / NBRC 103217 / DC2201).